The sequence spans 168 residues: Cyanate hydratase (168 aa).

Residues R91, E94, and S117 contribute to the active site.

It belongs to the cyanase family.

The catalysed reaction is cyanate + hydrogencarbonate + 3 H(+) = NH4(+) + 2 CO2. In terms of biological role, catalyzes the reaction of cyanate with bicarbonate to produce ammonia and carbon dioxide. This chain is Cyanate hydratase, found in Arabidopsis thaliana (Mouse-ear cress).